The sequence spans 74 residues: Beta-defensin 39 (74 aa).

The signal sequence occupies residues 1-23 (MKISYFLLLILSLGSSQINPVSG). 3 cysteine pairs are disulfide-bonded: Cys-29-Cys-58, Cys-36-Cys-51, and Cys-41-Cys-59.

This sequence belongs to the beta-defensin family. As to expression, only expressed in epididymis (caput, corpus and cauda).

The protein localises to the secreted. Functionally, has antibacterial activity. The polypeptide is Beta-defensin 39 (Defb39) (Mus musculus (Mouse)).